A 4427-amino-acid polypeptide reads, in one-letter code: Dynein axonemal heavy chain 2 (4427 aa).

The disordered stretch occupies residues 1–73; sequence MSSKAEKKQR…AQSEESVEPE (73 aa). The interval 1-1764 is stem; the sequence is MSSKAEKKQR…VIRQTNTQFQ (1764 aa). Polar residues predominate over residues 14–23; the sequence is RGSSQASWSG. Basic and acidic residues predominate over residues 50–59; that stretch reads LPKEEPEPRL. Residues 1404–1439 form a TPR 1 repeat; the sequence is EDNQVALSTMKASRFVKAFEKDVDHWERCLSLILEV. 4 AAA regions span residues 1765-1986, 2046-2273, 2378-2625, and 2722-2974; these read YNYE…LLRY, ETVE…DNCK, RYPP…VFQG, and EYNL…LRRH. ATP is bound by residues 1803-1810, 2084-2091, and 2416-2423; these read GPAGTGKT, GCTGSGKT, and GPVGTGKT. One copy of the TPR 2 repeat lies at 2721–2754; that stretch reads NEYNLSPSVVPMQLVLFREAIEHITRIVRVIGQP. 2762–2769 contributes to the ATP binding site; that stretch reads GIGGSGRQ. A stalk region spans residues 2989-3272; that stretch reads YKKLLGEKRQ…EELRKKSEEM (284 aa). Residues 3012 to 3049 adopt a coiled-coil conformation; sequence FKIDETREKVQVMSLELEDAKKKVAEFQKQCEEYLVII. The TPR 3 repeat unit spans residues 3072–3105; the sequence is VEEIKCQALADNAQKDLEEALPALEEAMRALESL. Coiled-coil stretches lie at residues 3216–3304 and 3523–3567; these read KRIR…EEDL and VRKE…GSLL. 2 AAA regions span residues 3358–3588 and 3804–4023; these read LCNP…EVTE and VTSF…LLSL. TPR repeat units lie at residues 4072–4104 and 4105–4140; these read STPF…LLPG and MDPP…QPQI.

It belongs to the dynein heavy chain family. In terms of assembly, part of the axonemal inner dynein arm complex that consists of at least two heavy chains and a number of intermediate and light chains. Interacts with DNAI4. As to expression, expressed primarily in trachea and testis, 2 tissues containing axonemal structures. Also expressed in lung. Expressed in spermatozoa (at protein level).

The protein resides in the cytoplasm. The protein localises to the cytoskeleton. It is found in the cilium axoneme. Its subcellular location is the flagellum axoneme. Its function is as follows. As part of the axonemal inner dynein arm complex plays a central role in ciliary beat. Expressed in sperm flagellum, it is required for sperm motility. Dyneins are microtubule-based molecular motors possessing ATPase activities that can convert the chemical energy of ATP into relative sliding between adjacent microtubule doublets to generate ciliary bending. This is Dynein axonemal heavy chain 2 from Homo sapiens (Human).